The sequence spans 34 residues: Photosystem II reaction center protein Psb30 (34 aa).

The chain crosses the membrane as a helical span at residues 6–26 (VIGQLVSTGAIMLLGPAIIIL).

The protein belongs to the Psb30/Ycf12 family. As to quaternary structure, PSII is composed of 1 copy each of membrane proteins PsbA, PsbB, PsbC, PsbD, PsbE, PsbF, PsbH, PsbI, PsbJ, PsbK, PsbL, PsbM, PsbT, PsbX, PsbY, PsbZ, Psb30/Ycf12, peripheral proteins of the oxygen-evolving complex and a large number of cofactors. It forms dimeric complexes.

Its subcellular location is the plastid. It localises to the chloroplast thylakoid membrane. A core subunit of photosystem II (PSII), probably helps stabilize the reaction center. In Thalassiosira pseudonana (Marine diatom), this protein is Photosystem II reaction center protein Psb30.